The following is a 338-amino-acid chain: MAKRNAVVVTHTRLRQTGTVVAEAVSQLRVAGFEVTIIDNTEAPDFGVQPPCVSDDTEIVVVLGGDGTILRAAELVHCTQVPILGVNMGHVGFLAEFESFQIDEAIRRVATHDYSIDERMIAHVDVWLPGATKPIEDWALNDITLERADRGKMVELSIRVDDVEMNSFGADGVIVSTPTGSTAYAFSAGGPVMWPNVKALQLIPLAAHALFARPLIIGSGSTFTIDILDDSMSEGWICCDGRRQRALPQGTRVMVRESRDTLRLARLSGMPFTNRLVSKFDLPVVGWREHARNEASSQPLHHGHTFPAAAYAAGVAGDAGVAGTEPDKPGERDGKAGA.

The active-site Proton acceptor is the Asp66. NAD(+)-binding positions include 66 to 67 (DG), Arg71, 141 to 142 (ND), Lys152, Asp171, 182 to 187 (TAYAFS), and Ala206. The tract at residues 317–338 (GDAGVAGTEPDKPGERDGKAGA) is disordered. Positions 325 to 338 (EPDKPGERDGKAGA) are enriched in basic and acidic residues.

The protein belongs to the NAD kinase family. The cofactor is a divalent metal cation.

It localises to the cytoplasm. The enzyme catalyses NAD(+) + ATP = ADP + NADP(+) + H(+). In terms of biological role, involved in the regulation of the intracellular balance of NAD and NADP, and is a key enzyme in the biosynthesis of NADP. Catalyzes specifically the phosphorylation on 2'-hydroxyl of the adenosine moiety of NAD to yield NADP. This is NAD kinase from Bifidobacterium longum subsp. infantis (strain ATCC 15697 / DSM 20088 / JCM 1222 / NCTC 11817 / S12).